A 75-amino-acid polypeptide reads, in one-letter code: UPF0270 protein PSPPH_1506 (75 aa).

The protein belongs to the UPF0270 family.

In Pseudomonas savastanoi pv. phaseolicola (strain 1448A / Race 6) (Pseudomonas syringae pv. phaseolicola (strain 1448A / Race 6)), this protein is UPF0270 protein PSPPH_1506.